A 72-amino-acid polypeptide reads, in one-letter code: MENPHEQVQANILSRIIGNVKRLNESVAILNQELVTINNRNKNLEIMGAICDNYHSSVQFNLEATNNKKPPL.

Met-1 is subject to N-acetylmethionine. A coiled-coil region spans residues 19-47; sequence NVKRLNESVAILNQELVTINNRNKNLEIM.

Belongs to the DASH complex DAD4 family. As to quaternary structure, component of the DASH complex consisting of ASK1, DAD1, DAD2, DAD3, DAD4, DAM1, DUO1, HSK3, SPC19 and SPC34, with a stoichiometry of one copy of each subunit per complex. Multiple DASH complexes oligomerize to form a ring that encircles spindle microtubules and organizes the rod-like NDC80 complexes of the outer kinetochore. DASH complex oligomerization strengthens microtubule attachments. On cytoplasmic microtubules, DASH complexes appear to form patches instead of rings.

The protein resides in the nucleus. The protein localises to the cytoplasm. It localises to the cytoskeleton. It is found in the spindle. Its subcellular location is the chromosome. The protein resides in the centromere. The protein localises to the kinetochore. In terms of biological role, component of the DASH complex that connects microtubules with kinetochores and couples microtubule depolymerisation to chromosome movement; it is involved in retrieving kinetochores to the spindle poles before their re-orientation on the spindle in early mitosis and allows microtubule depolymerization to pull chromosomes apart and resist detachment during anaphase. Kinetochores, consisting of a centromere-associated inner segment and a microtubule-contacting outer segment, play a crucial role in chromosome segregation by mediating the physical connection between centromeric DNA and microtubules. Kinetochores also serve as an input point for the spindle assembly checkpoint, which delays anaphase until all chromosomes have bioriented on the mitotic spindle. During spindle-kinetochore attachment, kinetochores first attach to the lateral surface of spindle microtubules, which supports the congression of chromosomes toward the middle of the dividing cell; they then slide along towards the spindle pole, a process independent of the DASH complex but requiring the NDC80 complex. When the end of a disassembling microtubule reaches the laterally attached kinetochore, the DASH complex together with the NDC80 complex and STU2 convert lateral attachment to end-on capture to produce a structure that can track with microtubule shortening and sustain attachment when tension is applied across sister kinetochores upon their biorientation. Microtubule depolymerization proceeds by protofilament splaying and induces the kinetochore-attached DASH complex to slide longitudinally, thereby helping to transduce depolymerization energy into pulling forces to disjoin chromatids. Incorrect microtubule attachments are corrected by releasing microubules from the kinetochore through phosphorylation by IPL1 of kinetochore components. Links the microtubule cytoskeleton to chromosomes during interphase. Also contributes to the poleward transport of kinetochores on microtubules following centromeric DNA replication in S-phase. The sequence is that of DASH complex subunit DAD4 (DAD4) from Saccharomyces cerevisiae (strain ATCC 204508 / S288c) (Baker's yeast).